Here is a 453-residue protein sequence, read N- to C-terminus: Cysteine desulfurase, mitochondrial (453 aa).

A mitochondrion-targeting transit peptide spans 1–34 (MASKVISATIRRTLTKPHGTFSRCRYLSTAAAAT). Residues 123–124 (AT), Asn203, Gln231, and 251–253 (SAH) contribute to the pyridoxal 5'-phosphate site. Lys254 carries the post-translational modification N6-(pyridoxal phosphate)lysine. Residue Thr291 coordinates pyridoxal 5'-phosphate. The Cysteine persulfide intermediate role is filled by Cys377. Residue Cys377 participates in [2Fe-2S] cluster binding.

It belongs to the class-V pyridoxal-phosphate-dependent aminotransferase family. NifS/IscS subfamily. Interacts with FH. Interacts with SUFE1. It depends on pyridoxal 5'-phosphate as a cofactor.

Its subcellular location is the mitochondrion. The enzyme catalyses (sulfur carrier)-H + L-cysteine = (sulfur carrier)-SH + L-alanine. With respect to regulation, threefold increase in the catalytic activity in the presence of FH (frataxin). 30-fold increase in the catalytic activity in the presence of SUFE1. Functionally, catalyzes the removal of elemental sulfur from cysteine to produce alanine. Supplies the inorganic sulfur for iron-sulfur (Fe-S) clusters. The sequence is that of Cysteine desulfurase, mitochondrial from Arabidopsis thaliana (Mouse-ear cress).